The chain runs to 697 residues: Pentatricopeptide repeat-containing protein 1, mitochondrial (697 aa).

The transit peptide at 1–36 directs the protein to the mitochondrion; the sequence is MLKRAHYVALHVTLNHNGLSYQRVFSCLTQFPMLRH. PPR repeat units follow at residues 257 to 288 and 294 to 328; these read RPFT…VKNK and SDVF…NVNF.

It localises to the mitochondrion. In terms of biological role, mitochondrial RNA-binding protein required for the stability of the cox2 and cox3 mRNAs. The chain is Pentatricopeptide repeat-containing protein 1, mitochondrial (ppr1) from Schizosaccharomyces pombe (strain 972 / ATCC 24843) (Fission yeast).